Reading from the N-terminus, the 374-residue chain is MEMO1 family protein aq_1336 (374 aa).

This sequence belongs to the MEMO1 family.

The protein is MEMO1 family protein aq_1336 of Aquifex aeolicus (strain VF5).